We begin with the raw amino-acid sequence, 869 residues long: Dynamin-3 (869 aa).

The 267-residue stretch at 28-294 (LLELPQIAVV…LTNHIRDTLP (267 aa)) folds into the Dynamin-type G domain. The segment at 38 to 45 (GGQSAGKS) is G1 motif. 38–46 (GGQSAGKSS) is a binding site for GTP. The G2 motif stretch occupies residues 64 to 66 (VTR). The G3 motif stretch occupies residues 136-139 (DLPG). Residues 205–208 (TKLD) are G4 motif. 205–211 (TKLDLMD) lines the GTP pocket. Tyr-231 carries the post-translational modification Phosphotyrosine. A G5 motif region spans residues 235-238 (VNRS). Residue 236 to 239 (NRSQ) coordinates GTP. An N6-acetyllysine modification is found at Lys-299. Residues 515-621 (QGTNLPPSRQ…ACDSQEDVDS (107 aa)) enclose the PH domain. At Tyr-603 the chain carries Phosphotyrosine. An N6-acetyllysine modification is found at Lys-604. One can recognise a GED domain in the interval 659–750 (VETIRNLVDS…IIGDISTATV (92 aa)). A disordered region spans residues 747–869 (TATVSTPAPP…IRPLESSLLD (123 aa)). 2 positions are modified to phosphoserine: Ser-769 and Ser-773. Composition is skewed to pro residues over residues 797-822 (PAIP…PPFP) and 832-855 (PQVP…PSPT). The residue at position 853 (Ser-853) is a Phosphoserine.

It belongs to the TRAFAC class dynamin-like GTPase superfamily. Dynamin/Fzo/YdjA family.

Its subcellular location is the cytoplasm. The protein localises to the cytoskeleton. The enzyme catalyses GTP + H2O = GDP + phosphate + H(+). Its function is as follows. Microtubule-associated force-producing protein involved in producing microtubule bundles and able to bind and hydrolyze GTP. Most probably involved in vesicular trafficking processes, in particular endocytosis. This is Dynamin-3 (DNM3) from Homo sapiens (Human).